The chain runs to 490 residues: Lipoprotein lipase (490 aa).

Positions 1-25 (MERGRGMGKTALLAVLCLCLRGAAG) are cleaved as a signal peptide. The interval 32-53 (MNFEGIESKFSLRTPAEPDEDV) is interaction with GPIHBP1. Cys54 and Cys67 are joined by a disulfide. N-linked (GlcNAc...) (complex) asparagine glycosylation occurs at Asn70. A 3'-nitrotyrosine modification is found at Tyr121. The Nucleophile role is filled by Ser159. Asp183 functions as the Charge relay system in the catalytic mechanism. The residue at position 191 (Tyr191) is a 3'-nitrotyrosine. Residues Ala194, Arg197, Ser199, and Asp202 each contribute to the Ca(2+) site. Cysteines 243 and 266 form a disulfide. Positions 243–266 (CNLGEALRLIAEKGFSDVDQLVKC) are essential for determining substrate specificity. His268 functions as the Charge relay system in the catalytic mechanism. 2 cysteine pairs are disulfide-bonded: Cys291–Cys310 and Cys302–Cys305. The region spanning 341 to 464 (FHYQVKIHFF…KGEEAAIFVK (124 aa)) is the PLAT domain. Tyr343 is subject to 3'-nitrotyrosine. N-linked (GlcNAc...) asparagine glycans are attached at residues Asn354 and Asn386. Residues 417–421 (WSDWW) are important for interaction with lipoprotein particles. The important for heparin binding stretch occupies residues 430 to 434 (RVRVK). Position 430–441 (430–441 (RVRVKSGETQKK)) interacts with heparin. Residues 443–467 (VFCSRDGSSRLGKGEEAAIFVKCLE) are interaction with GPIHBP1. A disulfide bond links Cys445 and Cys465. The segment at 471 to 490 (SRKRGGAKKASKENSAHESA) is disordered. Residues 480 to 490 (ASKENSAHESA) are compositionally biased toward basic and acidic residues.

This sequence belongs to the AB hydrolase superfamily. Lipase family. As to quaternary structure, homodimer. Interacts with GPIHBP1 with 1:1 stoichiometry. Interacts with APOC2; the interaction activates LPL activity in the presence of lipids. Interaction with heparan sulfate proteoglycans is required to protect LPL against loss of activity. Associates with lipoprotein particles in blood plasma. Interacts with LMF1 and SEL1L; interaction with SEL1L is required to prevent aggregation of newly synthesized LPL in the endoplasmic reticulum (ER), and for normal export of LPL from the ER to the extracellular space. N-glycan at Asn-70 is a triantennary complex oligosaccharide containing sialic acid, galactose, mannose, and N-acetylglucosamine, the reducing GlcNAc being sulfated at C6. Post-translationally, tyrosine nitration after lipopolysaccharide (LPS) challenge down-regulates the lipase activity.

Its subcellular location is the cell membrane. It localises to the secreted. It is found in the extracellular space. The protein resides in the extracellular matrix. It carries out the reaction a triacylglycerol + H2O = a diacylglycerol + a fatty acid + H(+). The enzyme catalyses a 1,2-diacyl-sn-glycero-3-phosphocholine + H2O = a 2-acyl-sn-glycero-3-phosphocholine + a fatty acid + H(+). The catalysed reaction is 1,2,3-tri-(9Z-octadecenoyl)-glycerol + H2O = di-(9Z)-octadecenoylglycerol + (9Z)-octadecenoate + H(+). It catalyses the reaction 1,2-di-(9Z-octadecenoyl)-sn-glycero-3-phosphocholine + H2O = (9Z-octadecenoyl)-sn-glycero-3-phosphocholine + (9Z)-octadecenoate + H(+). It carries out the reaction 1,2,3-tributanoylglycerol + H2O = dibutanoylglycerol + butanoate + H(+). The enzyme catalyses 1,2-dihexadecanoyl-sn-glycero-3-phosphocholine + H2O = hexadecanoyl-sn-glycero-3-phosphocholine + hexadecanoate + H(+). Ca(2+) binding promotes protein stability and formation of the active homodimer. Key enzyme in triglyceride metabolism. Catalyzes the hydrolysis of triglycerides from circulating chylomicrons and very low density lipoproteins (VLDL), and thereby plays an important role in lipid clearance from the blood stream, lipid utilization and storage. Although it has both phospholipase and triglyceride lipase activities it is primarily a triglyceride lipase with low but detectable phospholipase activity. Mediates margination of triglyceride-rich lipoprotein particles in capillaries. Recruited to its site of action on the luminal surface of vascular endothelium by binding to GPIHBP1 and cell surface heparan sulfate proteoglycans. This is Lipoprotein lipase (LPL) from Gallus gallus (Chicken).